Here is a 262-residue protein sequence, read N- to C-terminus: Zinc import ATP-binding protein ZnuC (262 aa).

Residues 6-221 form the ABC transporter domain; the sequence is IRLDKVAVTL…PAFVELFGKN (216 aa). 38 to 45 provides a ligand contact to ATP; that stretch reads GPNGAGKT.

Belongs to the ABC transporter superfamily. Zinc importer (TC 3.A.1.15.5) family. As to quaternary structure, the complex is composed of two ATP-binding proteins (ZnuC), two transmembrane proteins (ZnuB) and a solute-binding protein (ZnuA).

The protein resides in the cell inner membrane. The enzyme catalyses Zn(2+)(out) + ATP(in) + H2O(in) = Zn(2+)(in) + ADP(in) + phosphate(in) + H(+)(in). Part of the ABC transporter complex ZnuABC involved in zinc import. Responsible for energy coupling to the transport system. The chain is Zinc import ATP-binding protein ZnuC from Pseudomonas syringae pv. syringae (strain B728a).